Consider the following 453-residue polypeptide: tRNA modification GTPase MnmE (453 aa).

Residues Arg-22, Glu-79, and Lys-119 each contribute to the (6S)-5-formyl-5,6,7,8-tetrahydrofolate site. Residues 215-376 form the TrmE-type G domain; that stretch reads GMKVVIAGRP…LKQHLKSLMG (162 aa). Asn-225 is a binding site for K(+). Residues 225–230, 244–250, 269–272, and 334–337 contribute to the GTP site; these read NAGKSS, TEIAGTT, DTAG, and NKAD. Position 229 (Ser-229) interacts with Mg(2+). 3 residues coordinate K(+): Thr-244, Ile-246, and Thr-249. Thr-250 provides a ligand contact to Mg(2+). Lys-453 is a (6S)-5-formyl-5,6,7,8-tetrahydrofolate binding site.

This sequence belongs to the TRAFAC class TrmE-Era-EngA-EngB-Septin-like GTPase superfamily. TrmE GTPase family. Homodimer. Heterotetramer of two MnmE and two MnmG subunits. It depends on K(+) as a cofactor.

The protein localises to the cytoplasm. Exhibits a very high intrinsic GTPase hydrolysis rate. Involved in the addition of a carboxymethylaminomethyl (cmnm) group at the wobble position (U34) of certain tRNAs, forming tRNA-cmnm(5)s(2)U34. The protein is tRNA modification GTPase MnmE of Shewanella halifaxensis (strain HAW-EB4).